Consider the following 172-residue polypeptide: Shikimate kinase (172 aa).

ATP is bound at residue 14–19 (GAGKST). Serine 18 provides a ligand contact to Mg(2+). Residues aspartate 36, arginine 60, and glycine 82 each coordinate substrate. Residue arginine 120 participates in ATP binding. Residue arginine 140 participates in substrate binding. Glutamine 157 is a binding site for ATP.

The protein belongs to the shikimate kinase family. In terms of assembly, monomer. Requires Mg(2+) as cofactor.

Its subcellular location is the cytoplasm. The catalysed reaction is shikimate + ATP = 3-phosphoshikimate + ADP + H(+). It participates in metabolic intermediate biosynthesis; chorismate biosynthesis; chorismate from D-erythrose 4-phosphate and phosphoenolpyruvate: step 5/7. Catalyzes the specific phosphorylation of the 3-hydroxyl group of shikimic acid using ATP as a cosubstrate. In Colwellia psychrerythraea (strain 34H / ATCC BAA-681) (Vibrio psychroerythus), this protein is Shikimate kinase.